The following is a 181-amino-acid chain: ATP-dependent protease subunit HslV (181 aa).

T8 is a catalytic residue. G165, C168, and T171 together coordinate Na(+).

It belongs to the peptidase T1B family. HslV subfamily. In terms of assembly, a double ring-shaped homohexamer of HslV is capped on each side by a ring-shaped HslU homohexamer. The assembly of the HslU/HslV complex is dependent on binding of ATP.

It is found in the cytoplasm. It carries out the reaction ATP-dependent cleavage of peptide bonds with broad specificity.. Allosterically activated by HslU binding. In terms of biological role, protease subunit of a proteasome-like degradation complex believed to be a general protein degrading machinery. The protein is ATP-dependent protease subunit HslV of Oceanobacillus iheyensis (strain DSM 14371 / CIP 107618 / JCM 11309 / KCTC 3954 / HTE831).